We begin with the raw amino-acid sequence, 261 residues long: Cytochrome c oxidase subunit 3 (261 aa).

Residues 1 to 15 are Mitochondrial matrix-facing; sequence MAHQAHSYHMVDPSP. A helical membrane pass occupies residues 16–34; the sequence is WPIFGAAAALLTTSGLIMW. Over 35–40 the chain is Mitochondrial intermembrane; the sequence is FHYSST. Residues 41 to 66 form a helical membrane-spanning segment; sequence TLLTMGLLSMLLVMLQWWRDVVREST. Residues 67 to 72 lie on the Mitochondrial matrix side of the membrane; that stretch reads FQGHHT. Residues 73 to 105 form a helical membrane-spanning segment; that stretch reads PTVQKGLRYGMILFITSEAFFFLGFFWAFFHSS. The Mitochondrial intermembrane segment spans residues 106–128; the sequence is LAPTPELGGQWPPTGVKPLNPLE. A helical membrane pass occupies residues 129–152; sequence VPLLNTAILLASGVTVTWAHHSIT. Over 153-155 the chain is Mitochondrial matrix; it reads EGN. The chain crosses the membrane as a helical span at residues 156–183; the sequence is RKQAIHALTLTILLGFYFTALQAMEYHE. Residues 184 to 190 are Mitochondrial intermembrane-facing; that stretch reads ASFSIAD. Residues 191-223 traverse the membrane as a helical segment; the sequence is SVYGSTFFVATGFHGLHVIIGSSFLTVCLLRLI. Over 224–232 the chain is Mitochondrial matrix; the sequence is KFHFTPNHH. A helical membrane pass occupies residues 233 to 256; the sequence is FGFEAAAWYWHFVDIIWLFLYMSM. Over 257–261 the chain is Mitochondrial intermembrane; sequence YWWGS.

It belongs to the cytochrome c oxidase subunit 3 family. In terms of assembly, component of the cytochrome c oxidase (complex IV, CIV), a multisubunit enzyme composed of 14 subunits. The complex is composed of a catalytic core of 3 subunits MT-CO1, MT-CO2 and MT-CO3, encoded in the mitochondrial DNA, and 11 supernumerary subunits COX4I, COX5A, COX5B, COX6A, COX6B, COX6C, COX7A, COX7B, COX7C, COX8 and NDUFA4, which are encoded in the nuclear genome. The complex exists as a monomer or a dimer and forms supercomplexes (SCs) in the inner mitochondrial membrane with NADH-ubiquinone oxidoreductase (complex I, CI) and ubiquinol-cytochrome c oxidoreductase (cytochrome b-c1 complex, complex III, CIII), resulting in different assemblies (supercomplex SCI(1)III(2)IV(1) and megacomplex MCI(2)III(2)IV(2)).

The protein resides in the mitochondrion inner membrane. The catalysed reaction is 4 Fe(II)-[cytochrome c] + O2 + 8 H(+)(in) = 4 Fe(III)-[cytochrome c] + 2 H2O + 4 H(+)(out). Component of the cytochrome c oxidase, the last enzyme in the mitochondrial electron transport chain which drives oxidative phosphorylation. The respiratory chain contains 3 multisubunit complexes succinate dehydrogenase (complex II, CII), ubiquinol-cytochrome c oxidoreductase (cytochrome b-c1 complex, complex III, CIII) and cytochrome c oxidase (complex IV, CIV), that cooperate to transfer electrons derived from NADH and succinate to molecular oxygen, creating an electrochemical gradient over the inner membrane that drives transmembrane transport and the ATP synthase. Cytochrome c oxidase is the component of the respiratory chain that catalyzes the reduction of oxygen to water. Electrons originating from reduced cytochrome c in the intermembrane space (IMS) are transferred via the dinuclear copper A center (CU(A)) of subunit 2 and heme A of subunit 1 to the active site in subunit 1, a binuclear center (BNC) formed by heme A3 and copper B (CU(B)). The BNC reduces molecular oxygen to 2 water molecules using 4 electrons from cytochrome c in the IMS and 4 protons from the mitochondrial matrix. The chain is Cytochrome c oxidase subunit 3 (MT-CO3) from Gallus gallus (Chicken).